A 212-amino-acid polypeptide reads, in one-letter code: Maleylacetoacetate isomerase (212 aa).

Positions 1-83 (MKLYTYYRST…YLEERYPQPA (83 aa)) constitute a GST N-terminal domain. The region spanning 88 to 211 (DPLRRARERG…HPANQPDTPA (124 aa)) is the GST C-terminal domain.

It belongs to the GST superfamily. Zeta family.

It catalyses the reaction 4-maleylacetoacetate = 4-fumarylacetoacetate. Its pathway is amino-acid degradation; L-phenylalanine degradation; acetoacetate and fumarate from L-phenylalanine: step 5/6. In Pseudomonas aeruginosa (strain ATCC 15692 / DSM 22644 / CIP 104116 / JCM 14847 / LMG 12228 / 1C / PRS 101 / PAO1), this protein is Maleylacetoacetate isomerase (maiA).